Consider the following 212-residue polypeptide: Imidazole glycerol phosphate synthase subunit HisH (212 aa).

One can recognise a Glutamine amidotransferase type-1 domain in the interval 2–212 (QTAIIDYGMG…LTMLKNFLNW (211 aa)). Cysteine 85 (nucleophile) is an active-site residue. Residues histidine 194 and glutamate 196 contribute to the active site.

Heterodimer of HisH and HisF.

The protein localises to the cytoplasm. The enzyme catalyses 5-[(5-phospho-1-deoxy-D-ribulos-1-ylimino)methylamino]-1-(5-phospho-beta-D-ribosyl)imidazole-4-carboxamide + L-glutamine = D-erythro-1-(imidazol-4-yl)glycerol 3-phosphate + 5-amino-1-(5-phospho-beta-D-ribosyl)imidazole-4-carboxamide + L-glutamate + H(+). It catalyses the reaction L-glutamine + H2O = L-glutamate + NH4(+). It participates in amino-acid biosynthesis; L-histidine biosynthesis; L-histidine from 5-phospho-alpha-D-ribose 1-diphosphate: step 5/9. IGPS catalyzes the conversion of PRFAR and glutamine to IGP, AICAR and glutamate. The HisH subunit catalyzes the hydrolysis of glutamine to glutamate and ammonia as part of the synthesis of IGP and AICAR. The resulting ammonia molecule is channeled to the active site of HisF. The protein is Imidazole glycerol phosphate synthase subunit HisH (hisH) of Neisseria meningitidis serogroup B (strain ATCC BAA-335 / MC58).